Here is a 501-residue protein sequence, read N- to C-terminus: Carboxypeptidase 1 (501 aa).

The region spanning 3–496 (IHTYEKEFFD…LIDYLSNKYS (494 aa)) is the Peptidase M32 domain. The short motif at 234-236 (HPF) is the HPF element. Positions 244-248 (DVRVT) match the DXRXT motif. Residue histidine 265 participates in Zn(2+) binding. The HEXXH motif lies at 265–269 (HECGH). The active-site Proton donor/acceptor is the glutamate 266. The Zn(2+) site is built by histidine 269 and glutamate 295. An HES/GQ motif is present at residues 294-297 (HESQ). Residues 347-352 (IRVEAD) carry the I/NRXXA/SD motif. The GXXQDXHW signature appears at 402 to 409 (GILQDVHW).

This sequence belongs to the peptidase M32 family. In terms of assembly, homodimer. Zn(2+) serves as cofactor.

It catalyses the reaction Release of a C-terminal amino acid with broad specificity, except for -Pro.. Its function is as follows. Broad specificity carboxypetidase that releases amino acids sequentially from the C-terminus, including neutral, aromatic, polar and basic residues. Has lower activity with substrates ending with His or Trp. The chain is Carboxypeptidase 1 (ypwA) from Bacillus subtilis (strain 168).